The sequence spans 108 residues: UPF0060 membrane protein RHOS4_03690 (108 aa).

A run of 4 helical transmembrane segments spans residues 5–25 (LAAYAGAALAEIAGCFAVWAW), 32–52 (ALWLVPGALSLGTFAWLLALT), 62–82 (AVYGGVYVAASLLWLWAVEGV), and 86–106 (RWDMGGAALVLAGAAVILWAP).

The protein belongs to the UPF0060 family.

The protein resides in the cell inner membrane. This chain is UPF0060 membrane protein RHOS4_03690, found in Cereibacter sphaeroides (strain ATCC 17023 / DSM 158 / JCM 6121 / CCUG 31486 / LMG 2827 / NBRC 12203 / NCIMB 8253 / ATH 2.4.1.) (Rhodobacter sphaeroides).